Here is a 466-residue protein sequence, read N- to C-terminus: Argininosuccinate lyase 1 (466 aa).

This sequence belongs to the lyase 1 family. Argininosuccinate lyase subfamily.

The protein resides in the cytoplasm. It catalyses the reaction 2-(N(omega)-L-arginino)succinate = fumarate + L-arginine. It functions in the pathway amino-acid biosynthesis; L-arginine biosynthesis; L-arginine from L-ornithine and carbamoyl phosphate: step 3/3. This Agrobacterium fabrum (strain C58 / ATCC 33970) (Agrobacterium tumefaciens (strain C58)) protein is Argininosuccinate lyase 1.